Consider the following 176-residue polypeptide: ATP-dependent protease subunit HslV (176 aa).

The active site involves Thr-2. The Na(+) site is built by Gly-157, Cys-160, and Thr-163.

The protein belongs to the peptidase T1B family. HslV subfamily. A double ring-shaped homohexamer of HslV is capped on each side by a ring-shaped HslU homohexamer. The assembly of the HslU/HslV complex is dependent on binding of ATP.

Its subcellular location is the cytoplasm. The catalysed reaction is ATP-dependent cleavage of peptide bonds with broad specificity.. With respect to regulation, allosterically activated by HslU binding. In terms of biological role, protease subunit of a proteasome-like degradation complex believed to be a general protein degrading machinery. This Ectopseudomonas mendocina (strain ymp) (Pseudomonas mendocina) protein is ATP-dependent protease subunit HslV.